We begin with the raw amino-acid sequence, 224 residues long: PKHD-type hydroxylase Shewmr7_0698 (224 aa).

One can recognise a Fe2OG dioxygenase domain in the interval 78-176 (QFYPPLFNRY…RTAAFMWLQS (99 aa)). 3 residues coordinate Fe cation: His96, Asp98, and His157. Arg167 is a 2-oxoglutarate binding site.

Fe(2+) is required as a cofactor. Requires L-ascorbate as cofactor.

In Shewanella sp. (strain MR-7), this protein is PKHD-type hydroxylase Shewmr7_0698.